The sequence spans 625 residues: MSRTSNRESLAALTLGAMGVVYGDIGTSPLYTMKEVFSPATGVPLDGVHLIGAVSVIFWGLMMVVTLKYVLLILRADNRGEGGIMALTALAANAAGKTARRRTVLLLMGVFGAALFYGDSVITPAISVLSAVEGLEVVTPAFKSYVLPISVTVLIGLFAVQRFGTSLVGKLFGPVIMLWFAVLSVTGVAEIIQQPAILAALNPLNAFEFLRSQGWHMFVAVGAIVLAFTGVEALYADMGHFGKRPIQLAWLGLVLPALAINYMGQGALLMRDPSALANPFYRLFPQAWLMPAVVLATLATVIASQAVISGAYSMTKQAVLLGLLPRMQVQYTSAKEIGQIYMPEVNWLLLISVLLAVVGFGSSSALASAYGIAVTMTMLITTALTFFVVRDGWGYPLPVALAATAVFLALDTLLVVSCSLKFFQGGWFPLVLGLVIFTVMATWRRGRELLIDNIRHDDPELLPFITALSADVVHRVPRTAVYTVANPDTVPQALMHNLKHNQVLHERNVILTVVFHDVPWIAFDERVQVKPLVPGFWKVQVNYGFKNAPDIPRALELCQSQGLSINLFETSYFLSREIVVPTKGAGMAHWREALFAIMSRNAGSVADFFRLPNNCVIELGTRVQI.

The next 12 membrane-spanning stretches (helical) occupy residues 10-30 (LAAL…TSPL), 47-67 (GVHL…VVTL), 104-124 (VLLL…VITP), 140-160 (PAFK…LFAV), 172-192 (FGPV…AEII), 214-234 (GWHM…VEAL), 250-270 (WLGL…ALLM), 283-303 (LFPQ…TVIA), 347-367 (WLLL…SALA), 369-389 (AYGI…FFVV), 396-416 (PLPV…LLVV), and 422-442 (FFQG…VMAT).

It belongs to the HAK/KUP transporter (TC 2.A.72) family.

The protein resides in the cell inner membrane. It carries out the reaction K(+)(in) + H(+)(in) = K(+)(out) + H(+)(out). Its function is as follows. Transport of potassium into the cell. Likely operates as a K(+):H(+) symporter. The chain is Probable potassium transport system protein Kup 2 from Albidiferax ferrireducens (strain ATCC BAA-621 / DSM 15236 / T118) (Rhodoferax ferrireducens).